A 114-amino-acid chain; its full sequence is Putative membrane protein insertion efficiency factor (114 aa).

Belongs to the UPF0161 family.

Its subcellular location is the cell inner membrane. Its function is as follows. Could be involved in insertion of integral membrane proteins into the membrane. This is Putative membrane protein insertion efficiency factor from Nitrobacter hamburgensis (strain DSM 10229 / NCIMB 13809 / X14).